The chain runs to 214 residues: Large ribosomal subunit protein uL3 (214 aa).

Glutamine 155 carries the post-translational modification N5-methylglutamine.

This sequence belongs to the universal ribosomal protein uL3 family. Part of the 50S ribosomal subunit. Forms a cluster with proteins L14 and L19. In terms of processing, methylated by PrmB.

One of the primary rRNA binding proteins, it binds directly near the 3'-end of the 23S rRNA, where it nucleates assembly of the 50S subunit. The chain is Large ribosomal subunit protein uL3 from Acinetobacter baumannii (strain ACICU).